The following is a 38-amino-acid chain: Photosystem II reaction center protein L (38 aa).

Residues 17-37 form a helical membrane-spanning segment; that stretch reads SLYWGLLLIFVLAILFSNYFF.

It belongs to the PsbL family. PSII is composed of 1 copy each of membrane proteins PsbA, PsbB, PsbC, PsbD, PsbE, PsbF, PsbH, PsbI, PsbJ, PsbK, PsbL, PsbM, PsbT, PsbX, PsbY, PsbZ, Psb30/Ycf12, at least 3 peripheral proteins of the oxygen-evolving complex and a large number of cofactors. It forms dimeric complexes.

It is found in the plastid. The protein resides in the chloroplast thylakoid membrane. Its function is as follows. One of the components of the core complex of photosystem II (PSII). PSII is a light-driven water:plastoquinone oxidoreductase that uses light energy to abstract electrons from H(2)O, generating O(2) and a proton gradient subsequently used for ATP formation. It consists of a core antenna complex that captures photons, and an electron transfer chain that converts photonic excitation into a charge separation. This subunit is found at the monomer-monomer interface and is required for correct PSII assembly and/or dimerization. The sequence is that of Photosystem II reaction center protein L from Aethionema cordifolium (Lebanon stonecress).